The sequence spans 1350 residues: MVFSLKESSDSISKPSSLKNSTIIENPEILNNNNNNNNSNNIIKSPNFLLSQKQRSINISNEQTQRELNNNGGNLDHRDPNSPKYLTSSHSSVVIPQDNSNNNNNNNIRISTSPILTEISENGLLESPTSPIRTSSTPTTPTSPPFITSPPFITSPKGLNSPRRLVGFFSKSTSYQSLLANNNNNNNNSNNSNNNSNSSNSNISCSNNSNKISRLINNSNTTDSNASIRSSNNNNDDFDNNDDEDLNSINNSSGIGIGVSSDYSLMGSSSSINGNTTTTTTNTYSYNDNDNVNEYSPKGKRLIRHEKSKSSPPLSPITPYYENLVIKGNYTNSNNYNNYNNYYYNNNSSGNNNNNNNNNNNNNNNNNNNNNNNNNNNNNNNNISGNSGYNNSRDDLFKRPFEMNKESSPTNSLIPNVSALKLNRVIKSSNGSTIFTSTSSDIASENDNNKNNENENENENENENENENENDNDSDSENENENDNSIGNKSNKSNSELSIEEQEKKKEKDLENYINMINNSGFITNDSNNNNNNNNSGNNNSFISNGSPFSPIKEESPQPSPTFSPKPTLQRQRSNSKNVLYSPNASPSNSCKIPTPPLLHNISIIDTSNNNNNNSNNIENQNNNNNNIDNNIDNNIDSIDKKLKNNNNNNNNNNNNNNNNNNNNNNNNNNNNNNNNNNNNDDDDDDNNIKKTPNNKINTNENPMIITNSVLKRSGNIDYLQINNNYVIPSPSPGTQLSECTNQQMKYNPPVSIVDFTLIEKIGEGGFGQVFLAKKKDTGEIVAIKRMSKELIWSKNKVSHIKNERDILAQGKNHRWIVSLVYSFQDDQYLYLAMEYVPGGDLRSLLSALNSLDEDSARFYMAEMVEAVDSCHRLGYCHRDLKPENFLISRDGHVKLADFGLSKNVVTRYHLRSASADNTINTTTSTPTTSSNINQLSSSMIEHTPMKFGAAANGNGPLNSSVTDFGSFKDLSVAARLAYSVVGSPFYMAPEVLQATRGYGDEVDWWSLGCMFYEFIFGVPPFDGDSPEEVMETVLKWKTMLQRPDGVSDELWDLISGLINDGSTRLGSGEKGVENIKNHIFFNGVPWGKLHDLDPPFVPLLQGDYDTTYFENTEKLDNNFLLQQTQQLSLLPPPLPPPPQTPTQPQQPSLPPQTPNDKMIFDKIRSPVVYTNTHSGNIITSRSRPRNILGFTYPRADDQPLLWNNNNNNNNNNNNNNNNLLKNFEELTILNNNNNKNKNKGNSNNNNNNNNNNNNNNNNNNNNNNNNNNNNNSNNNKNNSNNKTVTIPISTGRLLNEIDNCNNNNNNDENNINTGNLTPPNSSPFNSGENLNFEKQEPTSPYGSYSKQQQ.

8 disordered regions span residues 66–109 (RELN…NNIR), 121–159 (ENGLLESPTSPIRTSSTPTTPTSPPFITSPPFITSPKGL), 179–249 (LANN…LNSI), 270–296 (SSINGNTTTTTTNTYSYNDNDNVNEYS), 337–396 (NNYN…RDDL), 431–506 (GSTI…EKKK), 525–596 (NDSN…IPTP), and 612–701 (NNNS…NTNE). Residues 84–98 (KYLTSSHSSVVIPQD) are compositionally biased toward polar residues. Low complexity-rich tracts occupy residues 127–140 (SPTSPIRTSSTPTT) and 181–210 (NNNNNNNNSNNSNNNSNSSNSNISCSNNSN). The span at 211–222 (KISRLINNSNTT) shows a compositional bias: polar residues. Residues 223–235 (DSNASIRSSNNNN) show a composition bias toward low complexity. The span at 236–246 (DDFDNNDDEDL) shows a compositional bias: acidic residues. Low complexity-rich tracts occupy residues 270–293 (SSINGNTTTTTTNTYSYNDNDNVN) and 337–391 (NNYN…GYNN). A compositionally biased stretch (polar residues) spans 431–443 (GSTIFTSTSSDIA). The span at 454-482 (NENENENENENENENENDNDSDSENENEN) shows a compositional bias: acidic residues. 2 stretches are compositionally biased toward low complexity: residues 483 to 495 (DNSIGNKSNKSNS) and 525 to 551 (NDSNNNNNNNNSGNNNSFISNGSPFSP). Over residues 565–592 (PKPTLQRQRSNSKNVLYSPNASPSNSCK) the composition is skewed to polar residues. 3 stretches are compositionally biased toward low complexity: residues 612–637 (NNNSNNIENQNNNNNNIDNNIDNNID), 645–679 (NNNNNNNNNNNNNNNNNNNNNNNNNNNNNNNNNNN), and 690–701 (KKTPNNKINTNE). Residues 756 to 1082 (FTLIEKIGEG…VENIKNHIFF (327 aa)) form the Protein kinase domain. ATP-binding positions include 762–770 (IGEGGFGQV) and lysine 785. Aspartate 880 (proton acceptor) is an active-site residue. Positions 1083–1203 (NGVPWGKLHD…PRADDQPLLW (121 aa)) constitute an AGC-kinase C-terminal domain. 4 disordered regions span residues 1129–1159 (SLLPPPLPPPPQTPTQPQQPSLPPQTPNDKM), 1190–1219 (GFTYPRADDQPLLWNNNNNNNNNNNNNNNN), 1232–1285 (NNNN…NKTV), and 1300–1350 (NCNN…KQQQ). The segment covering 1131–1142 (LPPPLPPPPQTP) has biased composition (pro residues). 3 stretches are compositionally biased toward low complexity: residues 1204 to 1219 (NNNNNNNNNNNNNNNN), 1232 to 1283 (NNNN…SNNK), and 1300 to 1313 (NCNNNNNNDENNIN). 2 stretches are compositionally biased toward polar residues: residues 1314-1330 (TGNLTPPNSSPFNSGEN) and 1338-1350 (PTSPYGSYSKQQQ).

Belongs to the protein kinase superfamily. AGC Ser/Thr protein kinase family.

It carries out the reaction L-seryl-[protein] + ATP = O-phospho-L-seryl-[protein] + ADP + H(+). The catalysed reaction is L-threonyl-[protein] + ATP = O-phospho-L-threonyl-[protein] + ADP + H(+). This chain is Probable serine/threonine-protein kinase DDB_G0278845, found in Dictyostelium discoideum (Social amoeba).